An 832-amino-acid polypeptide reads, in one-letter code: AP-1 complex subunit gamma-1 (832 aa).

A GAE domain is found at 733–832 (LNVYASLLSA…QFDHKFDETL (100 aa)).

As to quaternary structure, adapter protein complex 1 (AP-1) is a heterotetramer composed of two large adaptins (gamma-type subunit APL4 and beta-type subunit APL2), a medium adaptin (mu-type subunit APM1) and a small adaptin (sigma-type subunit APS1). AP-1 interacts with clathrin. Also a component of the AP-1R complex composed of at least APM2, APL4 and APS1.

The protein resides in the cytoplasm. It is found in the golgi apparatus membrane. Its subcellular location is the cytoplasmic vesicle. The protein localises to the clathrin-coated vesicle membrane. In terms of biological role, adaptins are components of the adapter complexes which link clathrin to receptors in coated vesicles. Clathrin-associated protein complexes are believed to interact with the cytoplasmic tails of membrane proteins, leading to their selection and concentration. The AP-1 complex interacts directly with clathrin. Component of the AP-1-related (AP-1R) complex, an adapter protein complex that mediates sorting of cargo SNARE SNC1. In contrast to the APM1-containing AP-1 complex, AP-1R is incapable of sorting CHS3. The protein is AP-1 complex subunit gamma-1 (APL4) of Saccharomyces cerevisiae (strain ATCC 204508 / S288c) (Baker's yeast).